Here is a 346-residue protein sequence, read N- to C-terminus: Phosphoribosylformylglycinamidine cyclo-ligase (346 aa).

The protein belongs to the AIR synthase family.

Its subcellular location is the cytoplasm. It carries out the reaction 2-formamido-N(1)-(5-O-phospho-beta-D-ribosyl)acetamidine + ATP = 5-amino-1-(5-phospho-beta-D-ribosyl)imidazole + ADP + phosphate + H(+). Its pathway is purine metabolism; IMP biosynthesis via de novo pathway; 5-amino-1-(5-phospho-D-ribosyl)imidazole from N(2)-formyl-N(1)-(5-phospho-D-ribosyl)glycinamide: step 2/2. This chain is Phosphoribosylformylglycinamidine cyclo-ligase, found in Geobacillus kaustophilus (strain HTA426).